Consider the following 296-residue polypeptide: Sulfotransferase 1B1 (296 aa).

Residue 48 to 53 participates in 3'-phosphoadenylyl sulfate binding; the sequence is KSGTTW. 107 to 109 is a binding site for substrate; it reads KTH. The active-site Proton acceptor is His109. 3'-phosphoadenylyl sulfate is bound by residues Arg131, Ser139, Tyr194, 228 to 233, and 258 to 260; these read TSFEMM and RKG.

This sequence belongs to the sulfotransferase 1 family. As to expression, expressed highly in the colon, kidney and small intestine of male and female dogs. Highly expressed in the jejunum and ileum of the male dog than the female dog, which displayed more expression in duodenum (at protein level).

The protein localises to the cytoplasm. The enzyme catalyses a phenol + 3'-phosphoadenylyl sulfate = an aryl sulfate + adenosine 3',5'-bisphosphate + H(+). The catalysed reaction is 3,3',5-triiodo-L-thyronine + 3'-phosphoadenylyl sulfate = 3,3',5-triiodo-L-thyronine sulfate + adenosine 3',5'-bisphosphate + H(+). It carries out the reaction 3,3',5'-triiodo-L-thyronine + 3'-phosphoadenylyl sulfate = 3,3',5'-triiodo-L-thyronine sulfate + adenosine 3',5'-bisphosphate + H(+). It catalyses the reaction 3,3'-diiodo-L-thyronine + 3'-phosphoadenylyl sulfate = 3,3'-diiodo-L-thyronine sulfate + adenosine 3',5'-bisphosphate + H(+). The enzyme catalyses 4-ethylphenol + 3'-phosphoadenylyl sulfate = 4-ethylphenyl sulfate + adenosine 3',5'-bisphosphate + H(+). Sulfotransferase that utilizes 3'-phospho-5'-adenylyl sulfate (PAPS) as sulfonate donor to catalyze the sulfate conjugation of dopamine, small phenols such as 1-naphthol and p-nitrophenol and thyroid hormones, including 3,3'-diiodothyronine, triidothyronine (T3) and reverse triiodothyronine (rT3). May play a role in gut microbiota-host metabolic interaction. O-sulfonates 4-ethylphenol (4-EP), a dietary tyrosine-derived metabolite produced by gut bacteria. The product 4-EPS crosses the blood-brain barrier and may negatively regulate oligodendrocyte maturation and myelination, affecting the functional connectivity of different brain regions associated with the limbic system. This chain is Sulfotransferase 1B1 (SULT1B1), found in Canis lupus familiaris (Dog).